The sequence spans 317 residues: Probable cell division protein WhiA (317 aa).

Residues 267 to 300 constitute a DNA-binding region (H-T-H motif); sequence SLKELGEMLHPPVGKSGVNHRLRRLELIARQVRG.

This sequence belongs to the WhiA family.

Involved in cell division and chromosome segregation. The protein is Probable cell division protein WhiA of Moorella thermoacetica (strain ATCC 39073 / JCM 9320).